Consider the following 211-residue polypeptide: Methylthioribulose-1-phosphate dehydratase (211 aa).

Positions 94 and 96 each coordinate Zn(2+).

Belongs to the aldolase class II family. MtnB subfamily. It depends on Zn(2+) as a cofactor.

The enzyme catalyses 5-(methylsulfanyl)-D-ribulose 1-phosphate = 5-methylsulfanyl-2,3-dioxopentyl phosphate + H2O. Its pathway is amino-acid biosynthesis; L-methionine biosynthesis via salvage pathway; L-methionine from S-methyl-5-thio-alpha-D-ribose 1-phosphate: step 2/6. In terms of biological role, catalyzes the dehydration of methylthioribulose-1-phosphate (MTRu-1-P) into 2,3-diketo-5-methylthiopentyl-1-phosphate (DK-MTP-1-P). This Pseudoalteromonas translucida (strain TAC 125) protein is Methylthioribulose-1-phosphate dehydratase.